The following is a 489-amino-acid chain: Rhamnulokinase (489 aa).

13 to 17 (ASSGR) serves as a coordination point for ATP. A disulfide bridge links Cys68 with Cys222. Substrate-binding positions include Gly83 and 236-238 (HDT). Asp237 functions as the Proton acceptor in the catalytic mechanism. Thr259 is a binding site for ATP. Residue Asn296 coordinates substrate. An ATP-binding site is contributed by Gln304. Cys353 and Cys370 form a disulfide bridge. An ATP-binding site is contributed by Gly402. Cys413 and Cys417 are oxidised to a cystine.

It belongs to the rhamnulokinase family. Mg(2+) is required as a cofactor.

The catalysed reaction is L-rhamnulose + ATP = L-rhamnulose 1-phosphate + ADP + H(+). It participates in carbohydrate degradation; L-rhamnose degradation; glycerone phosphate from L-rhamnose: step 2/3. In terms of biological role, involved in the catabolism of L-rhamnose (6-deoxy-L-mannose). Catalyzes the transfer of the gamma-phosphate group from ATP to the 1-hydroxyl group of L-rhamnulose to yield L-rhamnulose 1-phosphate. The protein is Rhamnulokinase of Salmonella enteritidis PT4 (strain P125109).